The following is a 115-amino-acid chain: UPF0342 protein Bsph_0375 (115 aa).

It belongs to the UPF0342 family.

This is UPF0342 protein Bsph_0375 from Lysinibacillus sphaericus (strain C3-41).